The sequence spans 780 residues: MLPRPLRLLWDASPPGGVVLSSFRSRDPEEGGGPGGRGVGGGQEEEEEEEEDEAPVSVWDEEEDGATFTVTSRQYRPLDPLAPTPPPRSSRRLRAGTLEALVRHLLDARTSGADVTFTPAFLATHRAFTSTPALLGLVADRLEALESHPTDELERTIGVATSVLSTWLASHPEDFGSEVKGQLDRLESFLLRTGYAAGEGVGGGSADLIRNLRFRVDPQAPDLPKPLALPGDPPADPTDVLVFLADHLAEQLTLLDAELFLHLVPSQCLGSLWGHRDRPGHSHLCPSVRATVTQFNKVAGAVVSSVLGATSAGEGPGEVTIRPLRPPQRARLLEKWIRVAEECRLLRNFSSVYAVVSALQSSPIHRLRAAWGEATRDSLRVFSSLCQIFSEEDNYSQSRELLLQEVKLQPSLESNSKKAPRSGSGSRGGGVVPYLGTFLKDLVMLDAASKDELENGYINFDKRRKEFAVLSELRRLQNECRGYDLRPDPDIQQWLRGLRPLTEAQSHRVSCEVEPPGTSDPPAPRVLRPTLVVSQWTEVLGSVGGPTPLVSWDRPSVGGEEVPGTPAPLLTRLAQHMKWPSVSSLDSALESTPYLHSLADPSHLSPPASSPRPSRGHRRSASCGSPLSGGAEGASKGTEYRGGGSGPGASDCRIIRVQMELGEDGSVYKSILVTSQDKAPSVISRVLKKNNRDSAVASEYELVQLLPGERELTIPPSANVFYAMDGASHDFLLRQRRRPSTATLGLTSSPSASGTPPSEGGGGSFPRIKATGRKIARALF.

The disordered stretch occupies residues 1–92 (MLPRPLRLLW…PTPPPRSSRR (92 aa)). S13 carries the phosphoserine modification. The span at 31–42 (GGGPGGRGVGGG) shows a compositional bias: gly residues. Over residues 43–65 (QEEEEEEEEDEAPVSVWDEEEDG) the composition is skewed to acidic residues. One can recognise an N-terminal Ras-GEF domain in the interval 89–213 (SSRRLRAGTL…GSADLIRNLR (125 aa)). Residues 244–516 (LADHLAEQLT…HRVSCEVEPP (273 aa)) enclose the Ras-GEF domain. Positions 596-613 (HSLADPSHLSPPASSPRP) are enriched in low complexity. Disordered stretches follow at residues 596 to 651 (HSLA…GASD) and 741 to 769 (TATL…PRIK). Residues 651-738 (DCRIIRVQME…HDFLLRQRRR (88 aa)) enclose the Ras-associating domain. Over residues 741 to 758 (TATLGLTSSPSASGTPPS) the composition is skewed to low complexity.

Interacts with SAMD9.

In terms of biological role, probable guanine nucleotide exchange factor. Putative effector of Ras and/or Rap. Associates with the GTP-bound form of Rap 1A and H-Ras in vitro. The chain is Ral guanine nucleotide dissociation stimulator-like 2 (RGL2) from Canis lupus familiaris (Dog).